The following is a 131-amino-acid chain: Large ribosomal subunit protein bL17 (131 aa).

The protein belongs to the bacterial ribosomal protein bL17 family. In terms of assembly, part of the 50S ribosomal subunit. Contacts protein L32.

The polypeptide is Large ribosomal subunit protein bL17 (Bordetella petrii (strain ATCC BAA-461 / DSM 12804 / CCUG 43448)).